The primary structure comprises 277 residues: Thymidylate synthase (277 aa).

A dUMP-binding site is contributed by Arg-21. His-51 lines the (6R)-5,10-methylene-5,6,7,8-tetrahydrofolate pocket. 139 to 140 contributes to the dUMP binding site; the sequence is RR. The Nucleophile role is filled by Cys-159. DUMP contacts are provided by residues 179–182, Asn-190, and 220–222; these read RSAD and HIY. Residue Asp-182 coordinates (6R)-5,10-methylene-5,6,7,8-tetrahydrofolate. Residue Ala-276 coordinates (6R)-5,10-methylene-5,6,7,8-tetrahydrofolate.

It belongs to the thymidylate synthase family. Bacterial-type ThyA subfamily. As to quaternary structure, homodimer.

The protein localises to the cytoplasm. The catalysed reaction is dUMP + (6R)-5,10-methylene-5,6,7,8-tetrahydrofolate = 7,8-dihydrofolate + dTMP. The protein operates within pyrimidine metabolism; dTTP biosynthesis. Its function is as follows. Catalyzes the reductive methylation of 2'-deoxyuridine-5'-monophosphate (dUMP) to 2'-deoxythymidine-5'-monophosphate (dTMP) while utilizing 5,10-methylenetetrahydrofolate (mTHF) as the methyl donor and reductant in the reaction, yielding dihydrofolate (DHF) as a by-product. This enzymatic reaction provides an intracellular de novo source of dTMP, an essential precursor for DNA biosynthesis. This chain is Thymidylate synthase, found in Ruegeria sp. (strain TM1040) (Silicibacter sp.).